The sequence spans 129 residues: Small ribosomal subunit protein uS9 (129 aa).

It belongs to the universal ribosomal protein uS9 family.

This chain is Small ribosomal subunit protein uS9, found in Chlorobium limicola (strain DSM 245 / NBRC 103803 / 6330).